The chain runs to 61 residues: Small ribosomal subunit protein uS14 (61 aa).

Zn(2+) is bound by residues Cys-24, Cys-27, Cys-40, and Cys-43.

Belongs to the universal ribosomal protein uS14 family. Zinc-binding uS14 subfamily. Part of the 30S ribosomal subunit. Contacts proteins S3 and S10. Zn(2+) serves as cofactor.

In terms of biological role, binds 16S rRNA, required for the assembly of 30S particles and may also be responsible for determining the conformation of the 16S rRNA at the A site. In Rhodopirellula baltica (strain DSM 10527 / NCIMB 13988 / SH1), this protein is Small ribosomal subunit protein uS14.